Consider the following 283-residue polypeptide: Phosphatidylglycerol--prolipoprotein diacylglyceryl transferase (283 aa).

4 consecutive transmembrane segments (helical) span residues Leu-17–Gly-37, Phe-56–Tyr-76, Trp-92–Phe-112, and Gly-117–Ser-137. An a 1,2-diacyl-sn-glycero-3-phospho-(1'-sn-glycerol)-binding site is contributed by Arg-139. 3 helical membrane-spanning segments follow: residues Pro-194–Phe-214, Gly-222–Ala-242, and Gly-255–Val-275.

It belongs to the Lgt family.

The protein resides in the cell inner membrane. It catalyses the reaction L-cysteinyl-[prolipoprotein] + a 1,2-diacyl-sn-glycero-3-phospho-(1'-sn-glycerol) = an S-1,2-diacyl-sn-glyceryl-L-cysteinyl-[prolipoprotein] + sn-glycerol 1-phosphate + H(+). Its pathway is protein modification; lipoprotein biosynthesis (diacylglyceryl transfer). Catalyzes the transfer of the diacylglyceryl group from phosphatidylglycerol to the sulfhydryl group of the N-terminal cysteine of a prolipoprotein, the first step in the formation of mature lipoproteins. This chain is Phosphatidylglycerol--prolipoprotein diacylglyceryl transferase, found in Neisseria meningitidis serogroup C (strain 053442).